We begin with the raw amino-acid sequence, 165 residues long: Cyclic pyranopterin monophosphate synthase (165 aa).

Residues 83 to 85 (FCH) and 120 to 121 (ME) contribute to the substrate site. Residue Asp-135 is part of the active site.

Belongs to the MoaC family. As to quaternary structure, homohexamer; trimer of dimers.

It catalyses the reaction (8S)-3',8-cyclo-7,8-dihydroguanosine 5'-triphosphate = cyclic pyranopterin phosphate + diphosphate. It participates in cofactor biosynthesis; molybdopterin biosynthesis. Its function is as follows. Catalyzes the conversion of (8S)-3',8-cyclo-7,8-dihydroguanosine 5'-triphosphate to cyclic pyranopterin monophosphate (cPMP). The sequence is that of Cyclic pyranopterin monophosphate synthase from Xanthomonas axonopodis pv. citri (strain 306).